A 366-amino-acid polypeptide reads, in one-letter code: tRNA/tmRNA (uracil-C(5))-methyltransferase (366 aa).

Gln190, Tyr218, Asn223, Glu239, and Asp299 together coordinate S-adenosyl-L-methionine. Cys324 functions as the Nucleophile in the catalytic mechanism. Glu358 serves as the catalytic Proton acceptor.

It belongs to the class I-like SAM-binding methyltransferase superfamily. RNA M5U methyltransferase family. TrmA subfamily.

It carries out the reaction uridine(54) in tRNA + S-adenosyl-L-methionine = 5-methyluridine(54) in tRNA + S-adenosyl-L-homocysteine + H(+). The enzyme catalyses uridine(341) in tmRNA + S-adenosyl-L-methionine = 5-methyluridine(341) in tmRNA + S-adenosyl-L-homocysteine + H(+). Its function is as follows. Dual-specificity methyltransferase that catalyzes the formation of 5-methyluridine at position 54 (m5U54) in all tRNAs, and that of position 341 (m5U341) in tmRNA (transfer-mRNA). The polypeptide is tRNA/tmRNA (uracil-C(5))-methyltransferase (Salmonella typhi).